Reading from the N-terminus, the 249-residue chain is 2-C-methyl-D-erythritol 4-phosphate cytidylyltransferase (249 aa).

The protein belongs to the IspD/TarI cytidylyltransferase family. IspD subfamily.

The enzyme catalyses 2-C-methyl-D-erythritol 4-phosphate + CTP + H(+) = 4-CDP-2-C-methyl-D-erythritol + diphosphate. Its pathway is isoprenoid biosynthesis; isopentenyl diphosphate biosynthesis via DXP pathway; isopentenyl diphosphate from 1-deoxy-D-xylulose 5-phosphate: step 2/6. In terms of biological role, catalyzes the formation of 4-diphosphocytidyl-2-C-methyl-D-erythritol from CTP and 2-C-methyl-D-erythritol 4-phosphate (MEP). This is 2-C-methyl-D-erythritol 4-phosphate cytidylyltransferase from Shewanella oneidensis (strain ATCC 700550 / JCM 31522 / CIP 106686 / LMG 19005 / NCIMB 14063 / MR-1).